A 267-amino-acid chain; its full sequence is Putative transcription factor Ovo-like 1 (267 aa).

4 consecutive C2H2-type zinc fingers follow at residues 118–140 (FTCHICQKAFTYQRMLNRHMKCH), 146–168 (HLCTYCGKGFNDTFDLKRHVRTH), 174–197 (YKCSLCDKAFTQRCSLESHLKKIH), and 213–235 (YVCEECGCTSESQEGHVLHLKEH).

The protein localises to the nucleus. Its function is as follows. Putative transcription factor. Involved in hair formation and spermatogenesis. May function in the differentiation and/or maintenance of the urogenital system. The polypeptide is Putative transcription factor Ovo-like 1 (OVOL1) (Bos taurus (Bovine)).